The primary structure comprises 387 residues: Putative acid--amine ligase YjfC (387 aa).

Residue Arg-101–Asp-103 coordinates ATP. Mg(2+)-binding residues include Asp-103, Glu-116, and Asn-118. ATP is bound by residues Lys-265, Lys-302, Gly-309, Gln-337, and Leu-372–Thr-374.

Belongs to the glutathionylspermidine synthase preATP-grasp family.

In terms of biological role, may be a ligase forming an amide bond. Shows ATPase activity. Despite its similarity to the C-terminal synthetase domain of Gss, is not a glutathionylspermidine (Gsp) synthetase. Cannot synthesize Gsp, glutathione (GSH), or GSH intermediates, from GSH and spermidine, cysteine and glutamate, gamma-glutamylcysteine and spermidine, and gamma-glutamylcysteine and glycine. Does not bind to Gsp. The polypeptide is Putative acid--amine ligase YjfC (yjfC) (Escherichia coli (strain K12)).